The sequence spans 231 residues: Dephospho-CoA kinase domain-containing protein (231 aa).

The DPCK domain occupies 3–207; that stretch reads LVGLTGGIAS…RSMEYLPLRL (205 aa). An ATP-binding site is contributed by 8 to 15; the sequence is GGIASGKS.

The protein belongs to the CoaE family.

This chain is Dephospho-CoA kinase domain-containing protein (Dcakd), found in Mus musculus (Mouse).